The chain runs to 448 residues: Serine--tRNA ligase (448 aa).

246-248 contacts L-serine; sequence TAE. Residues 277-279 and Val293 each bind ATP; that span reads RKE. Glu300 serves as a coordination point for L-serine. 364 to 367 provides a ligand contact to ATP; the sequence is ELAS. L-serine is bound at residue Thr399.

The protein belongs to the class-II aminoacyl-tRNA synthetase family. Type-1 seryl-tRNA synthetase subfamily. Homodimer. The tRNA molecule binds across the dimer.

The protein localises to the cytoplasm. The catalysed reaction is tRNA(Ser) + L-serine + ATP = L-seryl-tRNA(Ser) + AMP + diphosphate + H(+). It carries out the reaction tRNA(Sec) + L-serine + ATP = L-seryl-tRNA(Sec) + AMP + diphosphate + H(+). It participates in aminoacyl-tRNA biosynthesis; selenocysteinyl-tRNA(Sec) biosynthesis; L-seryl-tRNA(Sec) from L-serine and tRNA(Sec): step 1/1. Catalyzes the attachment of serine to tRNA(Ser). Is also able to aminoacylate tRNA(Sec) with serine, to form the misacylated tRNA L-seryl-tRNA(Sec), which will be further converted into selenocysteinyl-tRNA(Sec). This Pyrobaculum islandicum (strain DSM 4184 / JCM 9189 / GEO3) protein is Serine--tRNA ligase.